We begin with the raw amino-acid sequence, 249 residues long: Proteasome subunit alpha type-3 (249 aa).

Ser-2 carries the post-translational modification N-acetylserine. O-acetylserine is present on residues Ser-214 and Ser-220. Lys-221 participates in a covalent cross-link: Glycyl lysine isopeptide (Lys-Gly) (interchain with G-Cter in ubiquitin).

The protein belongs to the peptidase T1A family. In terms of assembly, component of the 20S core complex of the 26S proteasome. The 26S proteasome is composed of a core protease (CP), known as the 20S proteasome, capped at one or both ends by the 19S regulatory particle (RP/PA700). The 20S proteasome core is composed of 28 subunits that are arranged in four stacked rings, resulting in a barrel-shaped structure. The two end rings are each formed by seven alpha subunits, and the two central rings are each formed by seven beta subunits. The catalytic chamber with the active sites is on the inside of the barrel. Ubiquitous low levels.

Its subcellular location is the cytoplasm. It localises to the nucleus. Its function is as follows. The proteasome is a multicatalytic proteinase complex which is characterized by its ability to cleave peptides with Arg, Phe, Tyr, Leu, and Glu adjacent to the leaving group at neutral or slightly basic pH. The proteasome has an ATP-dependent proteolytic activity. The sequence is that of Proteasome subunit alpha type-3 (PAG1) from Arabidopsis thaliana (Mouse-ear cress).